We begin with the raw amino-acid sequence, 70 residues long: Small ribosomal subunit protein bS21 (70 aa).

It belongs to the bacterial ribosomal protein bS21 family.

In Laribacter hongkongensis (strain HLHK9), this protein is Small ribosomal subunit protein bS21.